A 364-amino-acid polypeptide reads, in one-letter code: D-alanine--D-alanine ligase (364 aa).

The 214-residue stretch at 134 to 347 (RRLACINGLK…YPDLLDELIN (214 aa)) folds into the ATP-grasp domain. 167–222 (ASEFGWPLFVKPCSLGSSVGIHKANNMDELNAAVADALRYDEEILVEEFIVGREIE) lines the ATP pocket. Mg(2+)-binding residues include aspartate 300, glutamate 314, and asparagine 316.

This sequence belongs to the D-alanine--D-alanine ligase family. Requires Mg(2+) as cofactor. Mn(2+) is required as a cofactor.

The protein resides in the cytoplasm. It catalyses the reaction 2 D-alanine + ATP = D-alanyl-D-alanine + ADP + phosphate + H(+). Its pathway is cell wall biogenesis; peptidoglycan biosynthesis. Cell wall formation. This chain is D-alanine--D-alanine ligase, found in Legionella pneumophila (strain Paris).